A 117-amino-acid chain; its full sequence is Immunoglobulin kappa variable 1-12 (117 aa).

The first 22 residues, 1–22 (MDMRVPAQLLGLLLLWFPGSRC), serve as a signal peptide directing secretion. A framework-1 region spans residues 23–45 (DIQMTQSPSSVSASVGDRVTITC). The 94-residue stretch at 24–117 (IQMTQSPSSV…YYCQQANSFP (94 aa)) folds into the Ig-like domain. A disulfide bridge links C45 with C110. The tract at residues 46-56 (RASQGISSWLA) is complementarity-determining-1. The interval 57–71 (WYQQKPGKAPKLLIY) is framework-2. The segment at 72–78 (AASSLQS) is complementarity-determining-2. The tract at residues 79-110 (GVPSRFSGSGSGTDFTLTISSLQPEDFATYYC) is framework-3. Positions 111 to 117 (QQANSFP) are complementarity-determining-3.

Immunoglobulins are composed of two identical heavy chains and two identical light chains; disulfide-linked.

The protein localises to the secreted. It is found in the cell membrane. Its function is as follows. V region of the variable domain of immunoglobulin light chains that participates in the antigen recognition. Immunoglobulins, also known as antibodies, are membrane-bound or secreted glycoproteins produced by B lymphocytes. In the recognition phase of humoral immunity, the membrane-bound immunoglobulins serve as receptors which, upon binding of a specific antigen, trigger the clonal expansion and differentiation of B lymphocytes into immunoglobulins-secreting plasma cells. Secreted immunoglobulins mediate the effector phase of humoral immunity, which results in the elimination of bound antigens. The antigen binding site is formed by the variable domain of one heavy chain, together with that of its associated light chain. Thus, each immunoglobulin has two antigen binding sites with remarkable affinity for a particular antigen. The variable domains are assembled by a process called V-(D)-J rearrangement and can then be subjected to somatic hypermutations which, after exposure to antigen and selection, allow affinity maturation for a particular antigen. The protein is Immunoglobulin kappa variable 1-12 of Homo sapiens (Human).